A 175-amino-acid chain; its full sequence is Ribosome maturation factor RimM (175 aa).

One can recognise a PRC barrel domain in the interval E96–F175.

It belongs to the RimM family. In terms of assembly, binds ribosomal protein uS19.

Its subcellular location is the cytoplasm. Functionally, an accessory protein needed during the final step in the assembly of 30S ribosomal subunit, possibly for assembly of the head region. Essential for efficient processing of 16S rRNA. May be needed both before and after RbfA during the maturation of 16S rRNA. It has affinity for free ribosomal 30S subunits but not for 70S ribosomes. This chain is Ribosome maturation factor RimM, found in Haemophilus ducreyi (strain 35000HP / ATCC 700724).